A 306-amino-acid polypeptide reads, in one-letter code: Bacitracin transport ATP-binding protein BcrA (306 aa).

Residues 5 to 233 (IKTTDLTKMY…NRKYLEFQLS (229 aa)) enclose the ABC transporter domain. 37-44 (GRNGAGKT) contributes to the ATP binding site.

Belongs to the ABC transporter superfamily.

Its function is as follows. Part of the binding-protein-dependent transport system for bacitracin that confer resistance to this antibiotic. Probably responsible for energy coupling to the transport system. The sequence is that of Bacitracin transport ATP-binding protein BcrA (bcrA) from Bacillus licheniformis.